The primary structure comprises 143 residues: Large ribosomal subunit protein uL13c (143 aa).

Belongs to the universal ribosomal protein uL13 family. As to quaternary structure, part of the 50S ribosomal subunit.

The protein localises to the plastid. The protein resides in the chloroplast. This chain is Large ribosomal subunit protein uL13c, found in Guillardia theta (Cryptophyte).